The following is a 234-amino-acid chain: Heme-copper oxidase subunit 2 (234 aa).

The next 2 helical transmembrane spans lie at 13 to 33 (LFLLFTAVGVLAAGTVTAFFI) and 72 to 92 (LLFVTGIIVMGLIVATIDETL). Cu cation contacts are provided by histidine 151, cysteine 188, cysteine 192, and histidine 196.

The protein belongs to the cytochrome c oxidase subunit 2 family.

The protein resides in the cell membrane. This chain is Heme-copper oxidase subunit 2 (aoxA), found in Aeropyrum pernix (strain ATCC 700893 / DSM 11879 / JCM 9820 / NBRC 100138 / K1).